Here is a 66-residue protein sequence, read N- to C-terminus: Light-harvesting protein B-800-850 alpha chain B (66 aa).

Residues 1-11 (MNQGRIWTVVN) are Cytoplasmic-facing. The chain crosses the membrane as a helical span at residues 12–35 (PGVGLPLLLGSVTVIAILVHYAVL). An a bacteriochlorophyll-binding site is contributed by histidine 31. The Periplasmic segment spans residues 36–66 (SNTTWFPKYWNGATVAAPAAAPAPAAPAAKK).

It belongs to the antenna complex alpha subunit family. In terms of assembly, the core complex is formed by different alpha and beta chains, binding bacteriochlorophyll molecules, and arranged most probably in tetrameric structures disposed around the reaction center. The non-pigmented gamma chains may constitute additional components.

The protein resides in the cell inner membrane. Functionally, antenna complexes are light-harvesting systems, which transfer the excitation energy to the reaction centers. This is Light-harvesting protein B-800-850 alpha chain B (pucAB) from Rhodopseudomonas palustris (strain ATCC BAA-98 / CGA009).